The chain runs to 188 residues: Elongation factor P (188 aa).

N6-(3,6-diaminohexanoyl)-5-hydroxylysine is present on K34.

It belongs to the elongation factor P family. May be beta-lysylated on the epsilon-amino group of Lys-34 by the combined action of EpmA and EpmB, and then hydroxylated on the C5 position of the same residue by EpmC (if this protein is present). Lysylation is critical for the stimulatory effect of EF-P on peptide-bond formation. The lysylation moiety may extend toward the peptidyltransferase center and stabilize the terminal 3-CCA end of the tRNA. Hydroxylation of the C5 position on Lys-34 may allow additional potential stabilizing hydrogen-bond interactions with the P-tRNA.

It is found in the cytoplasm. It functions in the pathway protein biosynthesis; polypeptide chain elongation. Its function is as follows. Involved in peptide bond synthesis. Alleviates ribosome stalling that occurs when 3 or more consecutive Pro residues or the sequence PPG is present in a protein, possibly by augmenting the peptidyl transferase activity of the ribosome. Modification of Lys-34 is required for alleviation. The chain is Elongation factor P from Photobacterium profundum (strain SS9).